A 285-amino-acid polypeptide reads, in one-letter code: RNA 5'-monophosphate methyltransferase (285 aa).

S-adenosyl-L-methionine-binding positions include Arg46, Asn77, Asp111, 136–137 (DI), and Met165. The region spanning 53-275 (ELLRQLFPPE…KHTHETQAIP (223 aa)) is the Bin3-type SAM domain.

Belongs to the methyltransferase superfamily. In terms of assembly, interacts with DICER1; the interaction may be mediated by RNA.

The protein resides in the cytoplasm. The catalysed reaction is a 5'-end 5'-phospho-ribonucleoside-RNA + S-adenosyl-L-methionine = a 5'-end (5'-methylphospho)-ribonucleoside-RNA + S-adenosyl-L-homocysteine. It catalyses the reaction a 5'-end 5'-phospho-ribonucleoside-RNA + 2 S-adenosyl-L-methionine = a 5'-end (5'-bismethylphospho)-ribonucleoside-RNA + 2 S-adenosyl-L-homocysteine. Functionally, O-methyltransferase that specifically monomethylates 5'-monophosphate of cytoplasmic histidyl tRNA (tRNA(His)), acting as a capping enzyme by protecting tRNA(His) from cleavage by DICER1. Also able, with less efficiently, to methylate the 5' monophosphate of a subset of pre-miRNAs, acting as a negative regulator of miRNA processing. The 5' monophosphate of pre-miRNAs is recognized by DICER1 and is required for pre-miRNAs processing: methylation at this position reduces the processing of pre-miRNAs by DICER1. Was also reported to mediate dimethylation of pre-miR-145; however dimethylation cannot be reproduced by another group which observes a monomethylation of pre-miR-145. This chain is RNA 5'-monophosphate methyltransferase, found in Mus musculus (Mouse).